We begin with the raw amino-acid sequence, 182 residues long: Ribosome maturation factor RimM (182 aa).

The PRC barrel domain maps to 102–182 (EEGDYYWKDL…TIEVDWDPGF (81 aa)).

It belongs to the RimM family. Binds ribosomal protein uS19.

It is found in the cytoplasm. Functionally, an accessory protein needed during the final step in the assembly of 30S ribosomal subunit, possibly for assembly of the head region. Essential for efficient processing of 16S rRNA. May be needed both before and after RbfA during the maturation of 16S rRNA. It has affinity for free ribosomal 30S subunits but not for 70S ribosomes. The chain is Ribosome maturation factor RimM from Salmonella gallinarum (strain 287/91 / NCTC 13346).